Reading from the N-terminus, the 313-residue chain is Zinc transporter ZitB (313 aa).

The Cytoplasmic portion of the chain corresponds to 1–20 (MAHSHSHTSSHLPEDNNARR). Residues 21-41 (LLYAFGVTAGFMLVEVVGGFL) form a helical membrane-spanning segment. Residues 42–47 (SGSLAL) are Periplasmic-facing. A helical membrane pass occupies residues 48–68 (LADAGHMLTDTAALLFALLAV). Topologically, residues 69 to 89 (QFSRRPPTIRHTFGWLRLTTL) are cytoplasmic. A helical transmembrane segment spans residues 90 to 110 (AAFVNAIALVVITILIVWEAI). Residues 111–121 (ERFRTPRPVEG) are Periplasmic-facing. The helical transmembrane segment at 122–142 (GMMMAIAVAGLLANILSFWLL) threads the bilayer. Residues 143–159 (HHGSEEKNLNVRAAALH) are Cytoplasmic-facing. Residues 160–180 (VLGDLLGSVGAIIAALIIIWT) traverse the membrane as a helical segment. Glycine 181 is a topological domain (periplasmic). The chain crosses the membrane as a helical span at residues 182–202 (WTPADPILSILVSLLVLRSAW). The Cytoplasmic segment spans residues 203–313 (RLLKDSVNEL…GVSGHSHHHH (111 aa)).

This sequence belongs to the cation diffusion facilitator (CDF) transporter (TC 2.A.4) family. SLC30A subfamily.

The protein resides in the cell inner membrane. Involved in zinc efflux across the cytoplasmic membrane, thus reducing zinc accumulation in the cytoplasm and rendering bacteria more resistant to zinc. It may contribute to zinc homeostasis at low concentrations of zinc. The protein is Zinc transporter ZitB (zitB) of Shigella flexneri.